The sequence spans 571 residues: Proline--tRNA ligase (571 aa).

The protein belongs to the class-II aminoacyl-tRNA synthetase family. ProS type 1 subfamily. In terms of assembly, homodimer.

The protein resides in the cytoplasm. The enzyme catalyses tRNA(Pro) + L-proline + ATP = L-prolyl-tRNA(Pro) + AMP + diphosphate. Its function is as follows. Catalyzes the attachment of proline to tRNA(Pro) in a two-step reaction: proline is first activated by ATP to form Pro-AMP and then transferred to the acceptor end of tRNA(Pro). As ProRS can inadvertently accommodate and process non-cognate amino acids such as alanine and cysteine, to avoid such errors it has two additional distinct editing activities against alanine. One activity is designated as 'pretransfer' editing and involves the tRNA(Pro)-independent hydrolysis of activated Ala-AMP. The other activity is designated 'posttransfer' editing and involves deacylation of mischarged Ala-tRNA(Pro). The misacylated Cys-tRNA(Pro) is not edited by ProRS. This chain is Proline--tRNA ligase, found in Pseudomonas aeruginosa (strain LESB58).